We begin with the raw amino-acid sequence, 748 residues long: Junctophilin-3 (748 aa).

Topologically, residues 1–727 (MSSGGRFNFD…LKSSTGSAPI (727 aa)) are cytoplasmic. MORN repeat units lie at residues 15–37 (YCGGWEDGKAHGHGVCTGPKGQG), 39–60 (YTGSWSHGFEVLGVYTWPSGNT), 61–82 (YQGTWAQGKRHGIGLESKGKWV), 83–105 (YKGEWTHGFKGRYGVRECAGNGA), 107–129 (YEGTWSNGLQDGYGTETYSDGGT), and 130–152 (YQGQWVGGMRQGYGVRQSVPYGM). The interval 230–259 (SKSSLASQRSKQSSFRSEAGMSTVSSTASD) is disordered. Residues 231 to 244 (KSSLASQRSKQSSF) show a composition bias toward low complexity. Polar residues predominate over residues 249-259 (GMSTVSSTASD). 2 MORN repeats span residues 288–310 (YVGEWKNDKRSGFGVSQRSDGLK) and 311–333 (YEGEWASNRRHGYGCMTFPDGTK). The tract at residues 416–496 (AKEFSPSFQH…TPPPAPAARN (81 aa)) is disordered. A Phosphoserine modification is found at Ser-440. Over residues 448–457 (STGTPLQQES) the composition is skewed to polar residues. Thr-451 is modified (phosphothreonine). Ser-457 is modified (phosphoserine). Thr-471 is subject to Phosphothreonine. Phosphoserine is present on residues Ser-475 and Ser-506. Disordered stretches follow at residues 526–597 (CARS…SPGG) and 624–649 (HPQKRRYSKGGACRGLGDDHRPEDRG). Residues 639–649 (LGDDHRPEDRG) are compositionally biased toward basic and acidic residues. Phosphoserine occurs at positions 703 and 710. A helical; Anchor for type IV membrane protein transmembrane segment spans residues 728 to 748 (LVVMVILLNIGVAILFINFFI).

The protein belongs to the junctophilin family. As to expression, specifically expressed in brain.

The protein resides in the cell membrane. It is found in the endoplasmic reticulum membrane. Functionally, junctophilins contribute to the formation of junctional membrane complexes (JMCs) which link the plasma membrane with the endoplasmic or sarcoplasmic reticulum in excitable cells. Provides a structural foundation for functional cross-talk between the cell surface and intracellular calcium release channels. JPH3 is brain-specific and appears to have an active role in certain neurons involved in motor coordination and memory. The sequence is that of Junctophilin-3 (JPH3) from Homo sapiens (Human).